We begin with the raw amino-acid sequence, 204 residues long: Ribonuclease HII (204 aa).

The RNase H type-2 domain occupies 1 to 197; it reads MILGIDEAGR…KNRILNPKLL (197 aa). Positions 6, 7, and 103 each coordinate a divalent metal cation.

This sequence belongs to the RNase HII family. Mn(2+) serves as cofactor. It depends on Mg(2+) as a cofactor.

The protein localises to the cytoplasm. It carries out the reaction Endonucleolytic cleavage to 5'-phosphomonoester.. Functionally, endonuclease that specifically degrades the RNA of RNA-DNA hybrids. This chain is Ribonuclease HII, found in Helicobacter pylori (strain Shi470).